Consider the following 401-residue polypeptide: Probable tRNA sulfurtransferase (401 aa).

Residues 63–168 (TTAEQALSCL…EREAFLYGAR (106 aa)) enclose the THUMP domain. ATP is bound by residues 186–187 (LL), 211–212 (YF), R268, G290, and Q299.

Belongs to the ThiI family.

The protein resides in the cytoplasm. The enzyme catalyses [ThiI sulfur-carrier protein]-S-sulfanyl-L-cysteine + a uridine in tRNA + 2 reduced [2Fe-2S]-[ferredoxin] + ATP + H(+) = [ThiI sulfur-carrier protein]-L-cysteine + a 4-thiouridine in tRNA + 2 oxidized [2Fe-2S]-[ferredoxin] + AMP + diphosphate. It carries out the reaction [ThiS sulfur-carrier protein]-C-terminal Gly-Gly-AMP + S-sulfanyl-L-cysteinyl-[cysteine desulfurase] + AH2 = [ThiS sulfur-carrier protein]-C-terminal-Gly-aminoethanethioate + L-cysteinyl-[cysteine desulfurase] + A + AMP + 2 H(+). Its pathway is cofactor biosynthesis; thiamine diphosphate biosynthesis. Its function is as follows. Catalyzes the ATP-dependent transfer of a sulfur to tRNA to produce 4-thiouridine in position 8 of tRNAs, which functions as a near-UV photosensor. Also catalyzes the transfer of sulfur to the sulfur carrier protein ThiS, forming ThiS-thiocarboxylate. This is a step in the synthesis of thiazole, in the thiamine biosynthesis pathway. The sulfur is donated as persulfide by IscS. The protein is Probable tRNA sulfurtransferase of Treponema pallidum subsp. pallidum (strain SS14).